Consider the following 647-residue polypeptide: 1-deoxy-D-xylulose-5-phosphate synthase (647 aa).

Thiamine diphosphate contacts are provided by residues His74 and 115 to 117; that span reads GHS. Residue Asp146 coordinates Mg(2+). Residues 147-148, Asn175, Tyr286, and Glu367 contribute to the thiamine diphosphate site; that span reads GA. Mg(2+) is bound at residue Asn175.

Belongs to the transketolase family. DXPS subfamily. Homodimer. The cofactor is Mg(2+). Thiamine diphosphate serves as cofactor.

It carries out the reaction D-glyceraldehyde 3-phosphate + pyruvate + H(+) = 1-deoxy-D-xylulose 5-phosphate + CO2. Its pathway is metabolic intermediate biosynthesis; 1-deoxy-D-xylulose 5-phosphate biosynthesis; 1-deoxy-D-xylulose 5-phosphate from D-glyceraldehyde 3-phosphate and pyruvate: step 1/1. Its function is as follows. Catalyzes the acyloin condensation reaction between C atoms 2 and 3 of pyruvate and glyceraldehyde 3-phosphate to yield 1-deoxy-D-xylulose-5-phosphate (DXP). In Heliobacterium modesticaldum (strain ATCC 51547 / Ice1), this protein is 1-deoxy-D-xylulose-5-phosphate synthase.